The following is a 235-amino-acid chain: Peroxynitrite isomerase 2 (235 aa).

The short motif at 82–88 is the GXWXGXG element; that stretch reads GVWRGEG. 2 residues coordinate heme b: lysine 198 and histidine 225.

This sequence belongs to the nitrobindin family. In terms of assembly, homodimer. It depends on heme b as a cofactor.

It catalyses the reaction peroxynitrite = nitrate. Its pathway is nitrogen metabolism. Its function is as follows. Heme-binding protein able to scavenge peroxynitrite and to protect free L-tyrosine against peroxynitrite-mediated nitration, by acting as a peroxynitrite isomerase that converts peroxynitrite to nitrate. Therefore, this protein likely plays a role in peroxynitrite sensing and in the detoxification of reactive nitrogen and oxygen species (RNS and ROS, respectively). Is able to bind nitric oxide (NO) in vitro, but may act as a sensor of peroxynitrite levels in vivo. This chain is Peroxynitrite isomerase 2, found in Mycolicibacterium paratuberculosis (strain ATCC BAA-968 / K-10) (Mycobacterium paratuberculosis).